Consider the following 208-residue polypeptide: Claudin-like protein ZF-A89 (208 aa).

4 consecutive transmembrane segments (helical) span residues 8–28, 82–102, 117–137, and 160–180; these read LLAT…CALP, ALVV…IAGG, VVVA…IPVC, and LGAS…GGAL.

The protein belongs to the claudin family.

The protein localises to the cell membrane. The protein resides in the cell junction. It is found in the tight junction. Component of tight junction (TJ) strands. In Danio rerio (Zebrafish), this protein is Claudin-like protein ZF-A89 (cldnd).